We begin with the raw amino-acid sequence, 470 residues long: Angiopoietin-related protein 6 (470 aa).

An N-terminal signal peptide occupies residues 1–20 (MGKPWLRALQLLLLLGASWA). Asn58 carries N-linked (GlcNAc...) asparagine glycosylation. Positions 59 to 116 (ASELAALRMRVGRHEELLRELQRLAAADGAVAGEVRALRKESRGLSARLGQLRAQLQH) form a coiled coil. A glycan (N-linked (GlcNAc...) (complex) asparagine) is linked at Asn145. The interval 214-249 (SDTSRMLDPAPEPQRDQTQRQQEPMASPMPAGHPAV) is disordered. In terms of domain architecture, Fibrinogen C-terminal spans 251–469 (TKPVGPWQDC…KAAMLIRPLK (219 aa)). Disulfide bonds link Cys260–Cys287 and Cys410–Cys423.

The protein localises to the secreted. In terms of biological role, may play a role in the wound healing process. May promote epidermal proliferation, remodeling and regeneration. May promote the chemotactic activity of endothelial cells and induce neovascularization. May counteract high-fat diet-induced obesity and related insulin resistance through increased energy expenditure. The polypeptide is Angiopoietin-related protein 6 (ANGPTL6) (Homo sapiens (Human)).